Reading from the N-terminus, the 476-residue chain is MKWETVIGLEIHVQLNTKSKIFSSALTKYGKKPNSQACAIDLGLPGVLPVLNVEAVNKAIRFGVAINAHINKRNIFDRKNYFYPDLPKGYQISQMDWPIIGKGKIEIILGNQTKVICITRAHLEEDAGKSIHDMFDDNTAIDLNRAGIPLLEIVSEPDMRSAKEAVAYTKKIHTLVQYIDICDGNMQEGSFRCDANISIRPKGQKELGTRAELKNINSFKFLERAINFEVKRQKDILEEGEKVVQETRLYDSIKNETRSMRLKEETNDYRYFPDPDLLPIEISNELLEKVKQTLPELPDQRKTRFVVELGLSEYDADVLTSQKSLADYFEVMLEDNIVNIKLCANWVMGELSAALNKHQIDIQNSPITAPALSLLISRISDDTISVKTAKDVFKYMWDSKNSADEIIKVRGLKQMTNMVEIEVIIEQVIANSTLQVSQFKLGNNKILGFFIGKIMELTGGKVNPKQVNELLRKKLL.

This sequence belongs to the GatB/GatE family. GatB subfamily. As to quaternary structure, heterotrimer of A, B and C subunits.

It carries out the reaction L-glutamyl-tRNA(Gln) + L-glutamine + ATP + H2O = L-glutaminyl-tRNA(Gln) + L-glutamate + ADP + phosphate + H(+). The catalysed reaction is L-aspartyl-tRNA(Asn) + L-glutamine + ATP + H2O = L-asparaginyl-tRNA(Asn) + L-glutamate + ADP + phosphate + 2 H(+). Allows the formation of correctly charged Asn-tRNA(Asn) or Gln-tRNA(Gln) through the transamidation of misacylated Asp-tRNA(Asn) or Glu-tRNA(Gln) in organisms which lack either or both of asparaginyl-tRNA or glutaminyl-tRNA synthetases. The reaction takes place in the presence of glutamine and ATP through an activated phospho-Asp-tRNA(Asn) or phospho-Glu-tRNA(Gln). This is Aspartyl/glutamyl-tRNA(Asn/Gln) amidotransferase subunit B from Vesicomyosocius okutanii subsp. Calyptogena okutanii (strain HA).